The chain runs to 89 residues: Small ribosomal subunit protein uS15 (89 aa).

Belongs to the universal ribosomal protein uS15 family. Part of the 30S ribosomal subunit. Forms a bridge to the 50S subunit in the 70S ribosome, contacting the 23S rRNA.

Its function is as follows. One of the primary rRNA binding proteins, it binds directly to 16S rRNA where it helps nucleate assembly of the platform of the 30S subunit by binding and bridging several RNA helices of the 16S rRNA. In terms of biological role, forms an intersubunit bridge (bridge B4) with the 23S rRNA of the 50S subunit in the ribosome. This Xanthobacter autotrophicus (strain ATCC BAA-1158 / Py2) protein is Small ribosomal subunit protein uS15.